The following is a 154-amino-acid chain: MPELCPCGSGLEYSACCEPYVNGTQTPATPGLLMRSRFSAYVKHNVDYLIATWHPDCHATEWRNAIVDSFKNTEWLGLTVVEEKQGHEAGEGFVEFIAQFVDGNTGERQAMHERSRFLQIDQRWYYIDGTKPQPGRNAICPCGSGKKYKKCCGR.

Belongs to the UPF0225 family.

The protein is UPF0225 protein Spro_2712 of Serratia proteamaculans (strain 568).